The sequence spans 103 residues: Large ribosomal subunit protein bL21 (103 aa).

It belongs to the bacterial ribosomal protein bL21 family. In terms of assembly, part of the 50S ribosomal subunit. Contacts protein L20.

Its function is as follows. This protein binds to 23S rRNA in the presence of protein L20. This is Large ribosomal subunit protein bL21 from Mycobacteroides abscessus (strain ATCC 19977 / DSM 44196 / CCUG 20993 / CIP 104536 / JCM 13569 / NCTC 13031 / TMC 1543 / L948) (Mycobacterium abscessus).